Reading from the N-terminus, the 349-residue chain is Signal peptidase I (349 aa).

Transmembrane regions (helical) follow at residues 3-23 (NLFF…LDYF) and 25-45 (LPNT…VLWC). The Cytoplasmic segment spans residues 46 to 80 (YHRFVVLPKRHRQVARAEQRSGKTLSEEEKAKIEP). A helical membrane pass occupies residues 81 to 101 (ISEASEFLSSLFPVLAVVFLV). Topologically, residues 102–349 (RSFLFEPFQI…RFERFFTAIK (248 aa)) are periplasmic. Residues S115 and K196 contribute to the active site.

Belongs to the peptidase S26 family.

It localises to the cell inner membrane. It catalyses the reaction Cleavage of hydrophobic, N-terminal signal or leader sequences from secreted and periplasmic proteins.. The chain is Signal peptidase I (lepB) from Haemophilus influenzae (strain ATCC 51907 / DSM 11121 / KW20 / Rd).